Consider the following 584-residue polypeptide: 2-succinyl-5-enolpyruvyl-6-hydroxy-3-cyclohexene-1-carboxylate synthase (584 aa).

Belongs to the TPP enzyme family. MenD subfamily. In terms of assembly, homodimer. The cofactor is Mg(2+). Requires Mn(2+) as cofactor. It depends on thiamine diphosphate as a cofactor.

The catalysed reaction is isochorismate + 2-oxoglutarate + H(+) = 5-enolpyruvoyl-6-hydroxy-2-succinyl-cyclohex-3-ene-1-carboxylate + CO2. It participates in quinol/quinone metabolism; 1,4-dihydroxy-2-naphthoate biosynthesis; 1,4-dihydroxy-2-naphthoate from chorismate: step 2/7. It functions in the pathway quinol/quinone metabolism; menaquinone biosynthesis. Its function is as follows. Catalyzes the thiamine diphosphate-dependent decarboxylation of 2-oxoglutarate and the subsequent addition of the resulting succinic semialdehyde-thiamine pyrophosphate anion to isochorismate to yield 2-succinyl-5-enolpyruvyl-6-hydroxy-3-cyclohexene-1-carboxylate (SEPHCHC). The protein is 2-succinyl-5-enolpyruvyl-6-hydroxy-3-cyclohexene-1-carboxylate synthase of Bacillus cereus (strain ATCC 14579 / DSM 31 / CCUG 7414 / JCM 2152 / NBRC 15305 / NCIMB 9373 / NCTC 2599 / NRRL B-3711).